A 316-amino-acid polypeptide reads, in one-letter code: 2,3-dihydroxyphenylpropionate/2,3-dihydroxicinnamic acid 1,2-dioxygenase (316 aa).

Residue His115 is the Proton donor of the active site. The active-site Proton acceptor is His179.

This sequence belongs to the LigB/MhpB extradiol dioxygenase family. As to quaternary structure, homotetramer. It depends on Fe(2+) as a cofactor.

It carries out the reaction 3-(2,3-dihydroxyphenyl)propanoate + O2 = (2Z,4E)-2-hydroxy-6-oxonona-2,4-dienedioate + H(+). The enzyme catalyses (2E)-3-(2,3-dihydroxyphenyl)prop-2-enoate + O2 = (2Z,4E,7E)-2-hydroxy-6-oxonona-2,4,7-trienedioate + H(+). It functions in the pathway aromatic compound metabolism; 3-phenylpropanoate degradation. Functionally, catalyzes the non-heme iron(II)-dependent oxidative cleavage of 2,3-dihydroxyphenylpropionic acid and 2,3-dihydroxicinnamic acid into 2-hydroxy-6-ketononadienedioate and 2-hydroxy-6-ketononatrienedioate, respectively. The chain is 2,3-dihydroxyphenylpropionate/2,3-dihydroxicinnamic acid 1,2-dioxygenase from Paraburkholderia xenovorans (strain LB400).